Reading from the N-terminus, the 502-residue chain is Lysine--tRNA ligase (502 aa).

Mg(2+) contacts are provided by glutamate 398 and glutamate 405.

The protein belongs to the class-II aminoacyl-tRNA synthetase family. Homodimer. Mg(2+) serves as cofactor.

The protein resides in the cytoplasm. The catalysed reaction is tRNA(Lys) + L-lysine + ATP = L-lysyl-tRNA(Lys) + AMP + diphosphate. The chain is Lysine--tRNA ligase (lysS) from Thermotoga maritima (strain ATCC 43589 / DSM 3109 / JCM 10099 / NBRC 100826 / MSB8).